The sequence spans 851 residues: MISRSYTNLLDLASGNFPVMGRERRRLPRVMTVPGNVSEFDEDQAYSVSSDNPSSVSSDRMIIVANRLPLKAEKRNGSWSFSWDQDSLYLQLKDGLPEDMEILYVGSLSVDVDSNEQDDVAQILLDKFKCVPTFFPPDLQSKFYDGFCKRQIWPLFHYMLPFSADHGGRFDRSLWEAYVATNKLFFQKVIEVINPDDDFVWIHDYHLMVLPTFLRRRFNRIRMGFFLHSPFPSSEIYRSLPVREEILKALLNSDLIGFHTFDYARHFLTCCSRMLGLEYQSKRGYIGLEYYGRTVGIKIMPVGINMGRIQSVMRYSEEEGKVMELRNRFEGKTVLLGIDDMDIFKGINLKLLAMEQMLRQHPNWRGRAVLVQIVNPARGKGIDVEEIRGEIEESCRRINGEFGKPGYQPIIYIDTPVSINEINAYYHIAECVVVTAVRDGMNLTPYEYIVCRQGLLGSESDFSGPKKSMLVASEFIGCSPSLSGAIRVNPWNVEATGEALNEALSMSDAEKQLRHEKHFRYVSTHDVAYWSRSFLQDLERICVDHFKKRCWGMGISFGFRVVALDPNFRKLSIPCIVSDYKRAKSRAILLDYDGTLMPQNSINKAPSQEVLNFLDALCEDKKNSIFIVSGRGRESLSKWFTPCKKIGIAAEHGYFLKWSGSEEWETCGQSSDFGWMQIVEPVMKQYTESTDGSSIEIKESALVWQYRDADPGFGSLQAKEMLEHLESVLANEPVAVKSGHYIVEVKPQGVSKGSVSEKIFSSMAGKGKPVDFVLCIGDDRSDEDMFEAIGNAMSKRLLCDNALVFACTVGQKPSKAKYYLDDTTEVTCMLESLAEASEASNFSMRELDEAL.

Ser5 is subject to Phosphoserine. Position 32 is a phosphothreonine (Thr32). The segment at 59–540 (DRMIIVANRL…SRSFLQDLER (482 aa)) is glycosyltransferase.

In the N-terminal section; belongs to the glycosyltransferase 20 family. It in the C-terminal section; belongs to the trehalose phosphatase family. Binds to the phosphopeptide-binding site of GRF/14-3-3. Phosphorylated. In terms of tissue distribution, expressed in seedlings, leaves, roots, stems, flowers and siliques.

It carries out the reaction D-glucose 6-phosphate + UDP-alpha-D-glucose = alpha,alpha-trehalose 6-phosphate + UDP + H(+). The polypeptide is Probable alpha,alpha-trehalose-phosphate synthase [UDP-forming] 7 (TPS7) (Arabidopsis thaliana (Mouse-ear cress)).